The following is a 1582-amino-acid chain: Hybrid PKS-NRPS synthetase TAS1 (1582 aa).

Residues isoleucine 33–valine 387 are condensation (C) domain. Residues arginine 499–asparagine 892 form an adenylation (A) domain region. The Carrier domain occupies asparagine 1015–valine 1092. A Ketosynthase family 3 (KS3) domain is found at alanine 1127–serine 1574. Catalysis depends on for beta-ketoacyl synthase activity residues cysteine 1294 and histidine 1432. The interval glutamate 1460 to arginine 1485 is disordered. Polar residues predominate over residues arginine 1462–arginine 1485. Asparagine 1498 functions as the For beta-ketoacyl synthase activity in the catalytic mechanism.

In the N-terminal section; belongs to the NRP synthetase family. The cofactor is pantetheine 4'-phosphate.

It carries out the reaction acetoacetyl-CoA + L-isoleucine + ATP = tenuazonic acid + AMP + diphosphate + CoA + 2 H(+). Its function is as follows. Hybrid PKS-NRPS synthetase that mediates the biosynthesis of the toxin tenuazonic acid (TeA), an inhibitor of protein biosynthesis on ribosomes by suppressing the release of new protein. TAS1 alone is sufficient for TeA synthesis via the condensation of isoleucine (Ile) with acetoacetyl-CoA by the N-terminal NRPS module and subsequent cyclization conducted by the C-terminal KS domain. The protein is Hybrid PKS-NRPS synthetase TAS1 of Cordyceps militaris (strain CM01) (Caterpillar fungus).